Consider the following 138-residue polypeptide: Putative pre-16S rRNA nuclease (138 aa).

The protein belongs to the YqgF nuclease family.

The protein localises to the cytoplasm. Its function is as follows. Could be a nuclease involved in processing of the 5'-end of pre-16S rRNA. The protein is Putative pre-16S rRNA nuclease of Haemophilus ducreyi (strain 35000HP / ATCC 700724).